The following is a 64-amino-acid chain: Large ribosomal subunit protein bL35 (64 aa).

Residues 1 to 27 (MPKMKTKSGAKKRFKPTASGFKHKHAF) are disordered.

The protein belongs to the bacterial ribosomal protein bL35 family.

This chain is Large ribosomal subunit protein bL35, found in Azotobacter vinelandii (strain DJ / ATCC BAA-1303).